Consider the following 511-residue polypeptide: Keratin, type II cytoskeletal 72 (511 aa).

Residues 1-124 (MSRQLTHFPR…DPEIQRVRAQ (124 aa)) form a head region. The interval 125–160 (EREQIKALNNKFASFIDKVRFLEQQNQVLETKWNLL) is coil 1A. Residues 125 to 438 (EREQIKALNN…KLLESEECRM (314 aa)) enclose the IF rod domain. The linker 1 stretch occupies residues 161–179 (QQLDLNNCRKNLEPIYEGY). Positions 180-271 (ISNLQKQLEM…CLYEGEITQI (92 aa)) are coil 1B. The linker 12 stretch occupies residues 272-295 (QSHISDTSIVLSMDNNRDLDLDSI). Residues 296–434 (IAEVRAQYEE…ATYRKLLESE (139 aa)) are coil 2. The tail stretch occupies residues 435-511 (ECRMSGEYPN…SSCATKKASR (77 aa)). The tract at residues 486–511 (GSCGSELKDPLAKTSGSSCATKKASR) is disordered.

It belongs to the intermediate filament family. As to quaternary structure, heterotetramer of two type I and two type II keratins. In terms of tissue distribution, highly expressed in hair follicles from scalp and eyebrow. Also expressed in palmoplantar epidermis. Not expressed in face skin despite the presence of fine hairs histologically. In hair, it is specifically present in the inner root sheath (IRS) of the hair follicle. Present in the IRS cuticle, but not in Henle or Huxley layers of the IRS. In the IRS cuticle, its presence is delayed up to the height of the apex of the dermal papilla (at protein level).

Its function is as follows. Has a role in hair formation. Specific component of keratin intermediate filaments in the inner root sheath (IRS) of the hair follicle. The protein is Keratin, type II cytoskeletal 72 (KRT72) of Homo sapiens (Human).